Here is a 392-residue protein sequence, read N- to C-terminus: Putative F-box protein At1g71320 (392 aa).

The F-box domain occupies 8–55; the sequence is NPKTIFIPDDIAEGIFHHLPIKSLARFKVLSKKWTSMIESTYFSHKRL.

The protein is Putative F-box protein At1g71320 of Arabidopsis thaliana (Mouse-ear cress).